Reading from the N-terminus, the 363-residue chain is UDP-3-O-acylglucosamine N-acyltransferase (363 aa).

His-266 serves as the catalytic Proton acceptor.

The protein belongs to the transferase hexapeptide repeat family. LpxD subfamily. As to quaternary structure, homotrimer.

The enzyme catalyses a UDP-3-O-[(3R)-3-hydroxyacyl]-alpha-D-glucosamine + a (3R)-hydroxyacyl-[ACP] = a UDP-2-N,3-O-bis[(3R)-3-hydroxyacyl]-alpha-D-glucosamine + holo-[ACP] + H(+). It participates in bacterial outer membrane biogenesis; LPS lipid A biosynthesis. Functionally, catalyzes the N-acylation of UDP-3-O-acylglucosamine using 3-hydroxyacyl-ACP as the acyl donor. Is involved in the biosynthesis of lipid A, a phosphorylated glycolipid that anchors the lipopolysaccharide to the outer membrane of the cell. The chain is UDP-3-O-acylglucosamine N-acyltransferase from Bordetella bronchiseptica (strain ATCC BAA-588 / NCTC 13252 / RB50) (Alcaligenes bronchisepticus).